Consider the following 233-residue polypeptide: Clathrin light chain (233 aa).

A disordered region spans residues 1 to 124 (MSEKFPPLED…EDRSEVVDQW (124 aa)). Positions 17–43 (PNDKKDDDTDFLKREAEILGDEFKTEQ) are enriched in basic and acidic residues. At T49 the chain carries Phosphothreonine. S52 is modified (phosphoserine). Acidic residues predominate over residues 56–67 (DDDEIRDFEEQF). Residues 69-92 (DINSANGAVSSDQNGSATVSSGND) show a composition bias toward polar residues. Over residues 112 to 124 (SVKEDRSEVVDQW) the composition is skewed to basic and acidic residues. Positions 125–186 (KQRRAVEIHE…EAFLKKRDEF (62 aa)) form a coiled coil. The tract at residues 144–204 (KELQDEAIKH…DRALQLINQD (61 aa)) is involved in binding clathrin heavy chain.

This sequence belongs to the clathrin light chain family. In terms of assembly, clathrin coats are formed from molecules containing 3 heavy chains and 3 light chains. Interacts with the auxilin-like clathrin uncoating factor SWA2.

The protein resides in the cytoplasmic vesicle membrane. Its subcellular location is the membrane. The protein localises to the coated pit. Its function is as follows. Clathrin is the major protein of the polyhedral coat of coated pits and vesicles. In yeast, it is involved in the retention of proteins in an intracellular membrane compartment, presumably the trans-Golgi. The yeast light chain is important for cell growth. The light chain may help to properly orient the assembly/ disassembly of the clathrin coats. The chain is Clathrin light chain (CLC1) from Saccharomyces cerevisiae (strain ATCC 204508 / S288c) (Baker's yeast).